The primary structure comprises 369 residues: Cobalt-precorrin-5B C(1)-methyltransferase (369 aa).

Belongs to the CbiD family.

The enzyme catalyses Co-precorrin-5B + S-adenosyl-L-methionine = Co-precorrin-6A + S-adenosyl-L-homocysteine. Its pathway is cofactor biosynthesis; adenosylcobalamin biosynthesis; cob(II)yrinate a,c-diamide from sirohydrochlorin (anaerobic route): step 6/10. In terms of biological role, catalyzes the methylation of C-1 in cobalt-precorrin-5B to form cobalt-precorrin-6A. This Brucella melitensis biotype 1 (strain ATCC 23456 / CCUG 17765 / NCTC 10094 / 16M) protein is Cobalt-precorrin-5B C(1)-methyltransferase.